We begin with the raw amino-acid sequence, 417 residues long: D-galactonate dehydratase family member SeV_A0456 (417 aa).

Positions 43 and 127 each coordinate substrate. Catalysis depends on tyrosine 158, which acts as the Proton donor/acceptor. Aspartate 223 provides a ligand contact to Mg(2+). Histidine 225 acts as the Proton donor/acceptor in catalysis. Residues glutamate 249 and glutamate 275 each coordinate Mg(2+). Positions 275, 296, 325, 329, and 352 each coordinate substrate.

It belongs to the mandelate racemase/muconate lactonizing enzyme family. GalD subfamily. The cofactor is Mg(2+).

The enzyme catalyses D-gluconate = 2-dehydro-3-deoxy-D-gluconate + H2O. Functionally, has low D-gluconate dehydratase activity (in vitro), suggesting that it has no significant role in D-gluconate degradation in vivo. Has no detectable activity with a panel of 70 other acid sugars (in vitro). The chain is D-galactonate dehydratase family member SeV_A0456 from Salmonella virchow (strain SL491).